The sequence spans 270 residues: Interleukin-2 receptor subunit alpha (270 aa).

The signal sequence occupies residues 1–21 (MEPSLLMWGFFTFTMIPGCMA). The region spanning 22 to 84 (GACVQQPPSL…FWENKCQCMP (63 aa)) is the Sushi 1 domain. The Extracellular portion of the chain corresponds to 22-245 (GACVQQPPSL…QPIIFTTQYQ (224 aa)). 3 cysteine pairs are disulfide-bonded: C24–C67, C49–C80, and C51–C82. Residues N33 and N70 are each glycosylated (N-linked (GlcNAc...) asparagine). The segment at 87–124 (SPRIPVKQVTPRPEEQKERKTTETQGQMQPPNQANLPG) is disordered. Positions 98–108 (RPEEQKERKTT) are enriched in basic and acidic residues. Positions 112–121 (GQMQPPNQAN) are enriched in polar residues. The region spanning 124-191 (GHCKEPPPWE…WTQPKLKCKS (68 aa)) is the Sushi 2 domain. 2 disulfides stabilise this stretch: C126-C171 and C153-C189. N-linked (GlcNAc...) asparagine glycans are attached at residues N164 and N195. The segment at 190-225 (KSEKENGSFPEPQMSTAAPPTTKTSLPTRTKGTTDS) is disordered. The span at 202-225 (QMSTAAPPTTKTSLPTRTKGTTDS) shows a compositional bias: polar residues. N227 carries N-linked (GlcNAc...) asparagine glycosylation. The chain crosses the membrane as a helical span at residues 246-264 (LAVAGCVLLLLSILLLSGL). Topologically, residues 265–270 (TWQRRR) are cytoplasmic.

In terms of assembly, non-covalent dimer of an alpha and a beta subunit. IL2R exists in 3 different forms: a high affinity dimer, an intermediate affinity monomer (beta subunit), and a low affinity monomer (alpha subunit). The high and intermediate affinity forms also associate with a gamma subunit.

It localises to the membrane. Its function is as follows. Receptor for interleukin-2. The receptor is involved in the regulation of immune tolerance by controlling regulatory T cells (TREGs) activity. TREGs suppress the activation and expansion of autoreactive T-cells. The protein is Interleukin-2 receptor subunit alpha (IL2RA) of Sus scrofa (Pig).